The sequence spans 309 residues: Glutamyl-Q tRNA(Asp) synthetase (309 aa).

Residues 8–12 and glutamate 44 each bind L-glutamate; that span reads RFSPS. The short motif at 11–21 is the 'HIGH' region element; that stretch reads PSPTGPLHAGS. Positions 100, 102, 126, and 130 each coordinate Zn(2+). L-glutamate is bound by residues tyrosine 205 and arginine 223. Positions 261–265 match the 'KMSKS' region motif; that stretch reads KLSKQ. Lysine 264 is an ATP binding site.

This sequence belongs to the class-I aminoacyl-tRNA synthetase family. GluQ subfamily. The cofactor is Zn(2+).

Its function is as follows. Catalyzes the tRNA-independent activation of glutamate in presence of ATP and the subsequent transfer of glutamate onto a tRNA(Asp). Glutamate is transferred on the 2-amino-5-(4,5-dihydroxy-2-cyclopenten-1-yl) moiety of the queuosine in the wobble position of the QUC anticodon. This Albidiferax ferrireducens (strain ATCC BAA-621 / DSM 15236 / T118) (Rhodoferax ferrireducens) protein is Glutamyl-Q tRNA(Asp) synthetase.